We begin with the raw amino-acid sequence, 436 residues long: Tryptophan synthase beta chain (436 aa).

The residue at position 129 (Lys-129) is an N6-(pyridoxal phosphate)lysine.

The protein belongs to the TrpB family. As to quaternary structure, tetramer of two alpha and two beta chains. Requires pyridoxal 5'-phosphate as cofactor.

It carries out the reaction (1S,2R)-1-C-(indol-3-yl)glycerol 3-phosphate + L-serine = D-glyceraldehyde 3-phosphate + L-tryptophan + H2O. Its pathway is amino-acid biosynthesis; L-tryptophan biosynthesis; L-tryptophan from chorismate: step 5/5. In terms of biological role, the beta subunit is responsible for the synthesis of L-tryptophan from indole and L-serine. This is Tryptophan synthase beta chain from Prochlorococcus marinus (strain MIT 9313).